Reading from the N-terminus, the 585-residue chain is Nucleus accumbens-associated protein 2 (585 aa).

Residues 30–94 (CDVSIVVKGQ…CYTGKLTMAA (65 aa)) enclose the BTB domain. Residues Lys171 and Lys215 each participate in a glycyl lysine isopeptide (Lys-Gly) (interchain with G-Cter in SUMO2) cross-link. A compositionally biased stretch (polar residues) spans 238–261 (PYPQGERTSPGASSLPTTDSSTSY). Residues 238-269 (PYPQGERTSPGASSLPTTDSSTSYHNEDEDDD) form a disordered region. Residues Lys296, Lys426, and Lys453 each participate in a glycyl lysine isopeptide (Lys-Gly) (interchain with G-Cter in SUMO2) cross-link. The BEN domain maps to 348 to 445 (GSGVYITRGQ…DMCTNARRVR (98 aa)). The disordered stretch occupies residues 541–585 (APEQLPADGQSSPQAFEQGNTSSSRPQTPVATATRRPEGTYAGTL). The segment covering 549-571 (GQSSPQAFEQGNTSSSRPQTPVA) has biased composition (polar residues).

Homooligomer; mediated by the BTB domain. Interacts with the NuRD complex. Interacts (via C-terminal part) with HDAC2. Interacts (via BTB domain) with MTA1, MTA2 and MTA3.

It localises to the nucleus. Its function is as follows. Functions as a transcriptional repressor through its association with the NuRD complex. Recruits the NuRD complex to the promoter of MDM2, leading to the repression of MDM2 transcription and subsequent stability of p53/TP53. The protein is Nucleus accumbens-associated protein 2 (Nacc2) of Rattus norvegicus (Rat).